A 180-amino-acid chain; its full sequence is Translation initiation factor IF-3 (180 aa).

Belongs to the IF-3 family. As to quaternary structure, monomer.

The protein resides in the cytoplasm. In terms of biological role, IF-3 binds to the 30S ribosomal subunit and shifts the equilibrium between 70S ribosomes and their 50S and 30S subunits in favor of the free subunits, thus enhancing the availability of 30S subunits on which protein synthesis initiation begins. This is Translation initiation factor IF-3 from Xylella fastidiosa (strain 9a5c).